Consider the following 302-residue polypeptide: Phospho-N-acetylmuramoyl-pentapeptide-transferase (302 aa).

10 consecutive transmembrane segments (helical) span residues 1-21, 42-62, 67-87, 95-115, 123-143, 154-174, 178-198, 204-224, 229-249, and 279-299; these read MIAANFLLNLFLYPILIKLFR, GTPTMGGILFVLTGFLFGMIS, MVLLGMFLFFLIGFLDDFLSV, LKTYQKALLQTLAAFIMLLLI, FFGSTIEMGKWYYLFALLVIV, GLDGLAGWIYVSGSIPYWFFL, GVSEDILLILGVGVLAFLVFN, IFMGDTGSITLGGVLGTVSVL, FYLVLFFMIPVIETLSVILQV, and IVAVFTVFNLISSLVALEIFG.

The protein belongs to the glycosyltransferase 4 family. MraY subfamily. Mg(2+) serves as cofactor.

The protein localises to the cell inner membrane. It carries out the reaction UDP-N-acetyl-alpha-D-muramoyl-L-alanyl-gamma-D-glutamyl-meso-2,6-diaminopimeloyl-D-alanyl-D-alanine + di-trans,octa-cis-undecaprenyl phosphate = di-trans,octa-cis-undecaprenyl diphospho-N-acetyl-alpha-D-muramoyl-L-alanyl-D-glutamyl-meso-2,6-diaminopimeloyl-D-alanyl-D-alanine + UMP. The protein operates within cell wall biogenesis; peptidoglycan biosynthesis. Functionally, catalyzes the initial step of the lipid cycle reactions in the biosynthesis of the cell wall peptidoglycan: transfers peptidoglycan precursor phospho-MurNAc-pentapeptide from UDP-MurNAc-pentapeptide onto the lipid carrier undecaprenyl phosphate, yielding undecaprenyl-pyrophosphoryl-MurNAc-pentapeptide, known as lipid I. This Thermotoga maritima (strain ATCC 43589 / DSM 3109 / JCM 10099 / NBRC 100826 / MSB8) protein is Phospho-N-acetylmuramoyl-pentapeptide-transferase.